We begin with the raw amino-acid sequence, 396 residues long: S-adenosylmethionine synthase 1 (396 aa).

E12 serves as a coordination point for Mg(2+). Residue H18 participates in ATP binding. Position 46 (E46) interacts with K(+). Residues E59 and Q102 each contribute to the L-methionine site. ATP is bound by residues 170 to 172, 238 to 241, D249, 255 to 256, A272, K276, and K280; these read DGK, SGRF, and RK. D249 contributes to the L-methionine binding site. K280 provides a ligand contact to L-methionine.

Belongs to the AdoMet synthase family. In terms of assembly, homotetramer. Requires Mn(2+) as cofactor. It depends on Mg(2+) as a cofactor. Co(2+) serves as cofactor. K(+) is required as a cofactor.

It localises to the cytoplasm. The catalysed reaction is L-methionine + ATP + H2O = S-adenosyl-L-methionine + phosphate + diphosphate. The protein operates within amino-acid biosynthesis; S-adenosyl-L-methionine biosynthesis; S-adenosyl-L-methionine from L-methionine: step 1/1. Its function is as follows. Catalyzes the formation of S-adenosylmethionine from methionine and ATP. The reaction comprises two steps that are both catalyzed by the same enzyme: formation of S-adenosylmethionine (AdoMet) and triphosphate, and subsequent hydrolysis of the triphosphate. In Oryza sativa subsp. japonica (Rice), this protein is S-adenosylmethionine synthase 1 (SAM1).